We begin with the raw amino-acid sequence, 719 residues long: Cyclin-dependent kinase 11.1 (719 aa).

Basic and acidic residues-rich tracts occupy residues 1–20 (MSDH…ESHK), 38–48 (KGLESKMRESI), and 78–129 (KAKE…DQKV). Disordered stretches follow at residues 1 to 215 (MSDH…KDDD) and 231 to 315 (EEKE…EMTE). Residues 130–140 (HEHRHHHHHRK) are compositionally biased toward basic residues. Basic and acidic residues predominate over residues 141-163 (HETDGHRTNRSNRDRSSERDSEK). Basic residues predominate over residues 164–174 (HKRHIDRHKKS). 2 stretches are compositionally biased toward basic and acidic residues: residues 191–215 (HTDV…KDDD) and 264–274 (DDTKPKSPGKA). Positions 275-285 (EDDDDVIEVLD) are enriched in acidic residues. The region spanning 356–647 (YECVNRVDEG…ATQALDHEWF (292 aa)) is the Protein kinase domain. Residues 362–370 (VDEGTFGVV) and lysine 385 contribute to the ATP site. Residue aspartate 484 is the Proton acceptor of the active site. Positions 657-689 (EEFPTFPAKSEQNKAPPPAKQKQQENRISHVDP) are disordered. A compositionally biased stretch (basic and acidic residues) spans 678–689 (KQQENRISHVDP).

This sequence belongs to the protein kinase superfamily. CMGC Ser/Thr protein kinase family. CDC2/CDKX subfamily. As to expression, broadly expressed in somatic and germ line cells (at protein level). Not expressed in sperm (at protein level).

It is found in the nucleus. The catalysed reaction is L-seryl-[protein] + ATP = O-phospho-L-seryl-[protein] + ADP + H(+). It carries out the reaction L-threonyl-[protein] + ATP = O-phospho-L-threonyl-[protein] + ADP + H(+). In terms of biological role, probable cyclin-dependent kinase whose activity is most likely regulated by the cyclin cyl-1/Cylin-L. Important for normal oocyte and sperm development; probably required during multiple stages of gametogenesis. Plays a role in the activation of RAS-ERK signaling in the germ line. Also acts partially redundantly with cdk-11.2 to ensure embryonic viability. This chain is Cyclin-dependent kinase 11.1, found in Caenorhabditis elegans.